Here is a 93-residue protein sequence, read N- to C-terminus: Alpha-defensin 7 (93 aa).

Residues 1–19 (MKTLILLSALVLLAFQVQA) form the signal peptide. A propeptide spanning residues 20–58 (DPIQNTDEETKTEEQPGEDDQAVSVSFGDPEGSSLQEES) is cleaved from the precursor. Residues 22-56 (IQNTDEETKTEEQPGEDDQAVSVSFGDPEGSSLQE) form a disordered region. 3 disulfides stabilise this stretch: Cys-64–Cys-92, Cys-66–Cys-81, and Cys-71–Cys-91.

The protein belongs to the alpha-defensin family. In terms of tissue distribution, paneth cells of the small bowel.

The protein localises to the secreted. Functionally, probably contributes to the antimicrobial barrier function of the small bowel mucosa. The polypeptide is Alpha-defensin 7 (Defa7) (Mus musculus (Mouse)).